We begin with the raw amino-acid sequence, 330 residues long: Lipoyl synthase (330 aa).

[4Fe-4S] cluster-binding residues include Cys55, Cys60, Cys66, Cys81, Cys85, Cys88, and Ser292. Residues 67-281 (WEDREATFLI…AEEAREIGFV (215 aa)) enclose the Radical SAM core domain.

The protein belongs to the radical SAM superfamily. Lipoyl synthase family. Requires [4Fe-4S] cluster as cofactor.

The protein localises to the cytoplasm. The catalysed reaction is [[Fe-S] cluster scaffold protein carrying a second [4Fe-4S](2+) cluster] + N(6)-octanoyl-L-lysyl-[protein] + 2 oxidized [2Fe-2S]-[ferredoxin] + 2 S-adenosyl-L-methionine + 4 H(+) = [[Fe-S] cluster scaffold protein] + N(6)-[(R)-dihydrolipoyl]-L-lysyl-[protein] + 4 Fe(3+) + 2 hydrogen sulfide + 2 5'-deoxyadenosine + 2 L-methionine + 2 reduced [2Fe-2S]-[ferredoxin]. The protein operates within protein modification; protein lipoylation via endogenous pathway; protein N(6)-(lipoyl)lysine from octanoyl-[acyl-carrier-protein]: step 2/2. Functionally, catalyzes the radical-mediated insertion of two sulfur atoms into the C-6 and C-8 positions of the octanoyl moiety bound to the lipoyl domains of lipoate-dependent enzymes, thereby converting the octanoylated domains into lipoylated derivatives. This Cutibacterium acnes (strain DSM 16379 / KPA171202) (Propionibacterium acnes) protein is Lipoyl synthase.